A 342-amino-acid chain; its full sequence is Heat-inducible transcription repressor HrcA (342 aa).

The protein belongs to the HrcA family.

In terms of biological role, negative regulator of class I heat shock genes (grpE-dnaK-dnaJ and groELS operons). Prevents heat-shock induction of these operons. In Geobacter sulfurreducens (strain ATCC 51573 / DSM 12127 / PCA), this protein is Heat-inducible transcription repressor HrcA.